The following is a 333-amino-acid chain: Probable tRNA pseudouridine synthase B (333 aa).

Catalysis depends on Asp-66, which acts as the Nucleophile. In terms of domain architecture, PUA spans 233–308; that stretch reads LKKIIVKDSA…EVVEITRVIM (76 aa).

The protein belongs to the pseudouridine synthase TruB family. Type 2 subfamily.

It carries out the reaction uridine(55) in tRNA = pseudouridine(55) in tRNA. Its function is as follows. Could be responsible for synthesis of pseudouridine from uracil-55 in the psi GC loop of transfer RNAs. This is Probable tRNA pseudouridine synthase B from Methanococcus maripaludis (strain C7 / ATCC BAA-1331).